Here is a 648-residue protein sequence, read N- to C-terminus: Macrolide export ATP-binding/permease protein MacB (648 aa).

The 239-residue stretch at 5–243 folds into the ABC transporter domain; that stretch reads LELKDIRRSY…AGGTEPVVNT (239 aa). 41-48 provides a ligand contact to ATP; the sequence is GASGSGKS. A run of 4 helical transmembrane segments spans residues 273 to 293, 523 to 543, 576 to 596, and 611 to 631; these read LLTM…VVVG, LFMT…VMNI, AVLV…LIAF, and PLAL…FGWL.

The protein belongs to the ABC transporter superfamily. Macrolide exporter (TC 3.A.1.122) family. Homodimer. Part of the tripartite efflux system MacAB-TolC, which is composed of an inner membrane transporter, MacB, a periplasmic membrane fusion protein, MacA, and an outer membrane component, TolC. The complex forms a large protein conduit and can translocate molecules across both the inner and outer membranes. Interacts with MacA.

It localises to the cell inner membrane. Part of the tripartite efflux system MacAB-TolC. MacB is a non-canonical ABC transporter that contains transmembrane domains (TMD), which form a pore in the inner membrane, and an ATP-binding domain (NBD), which is responsible for energy generation. Confers resistance against macrolides. In Escherichia coli O157:H7, this protein is Macrolide export ATP-binding/permease protein MacB.